A 131-amino-acid chain; its full sequence is Large ribosomal subunit protein eL32 (131 aa).

The protein belongs to the eukaryotic ribosomal protein eL32 family. In terms of assembly, component of the large ribosomal subunit. Mature ribosomes consist of a small (40S) and a large (60S) subunit. The 40S subunit contains about 32 different proteins and 1 molecule of RNA (18S). The 60S subunit contains 45 different proteins and 3 molecules of RNA (25S, 5.8S and 5S).

The protein localises to the cytoplasm. Component of the ribosome, a large ribonucleoprotein complex responsible for the synthesis of proteins in the cell. The small ribosomal subunit (SSU) binds messenger RNAs (mRNAs) and translates the encoded message by selecting cognate aminoacyl-transfer RNA (tRNA) molecules. The large subunit (LSU) contains the ribosomal catalytic site termed the peptidyl transferase center (PTC), which catalyzes the formation of peptide bonds, thereby polymerizing the amino acids delivered by tRNAs into a polypeptide chain. The nascent polypeptides leave the ribosome through a tunnel in the LSU and interact with protein factors that function in enzymatic processing, targeting, and the membrane insertion of nascent chains at the exit of the ribosomal tunnel. This chain is Large ribosomal subunit protein eL32, found in Candida albicans (strain SC5314 / ATCC MYA-2876) (Yeast).